The following is a 573-amino-acid chain: Isocitrate dehydrogenase kinase/phosphatase (573 aa).

ATP-binding positions include 317 to 323 (APGVRGM) and Lys-338. Asp-373 is an active-site residue.

This sequence belongs to the AceK family.

The protein localises to the cytoplasm. It catalyses the reaction L-seryl-[isocitrate dehydrogenase] + ATP = O-phospho-L-seryl-[isocitrate dehydrogenase] + ADP + H(+). In terms of biological role, bifunctional enzyme which can phosphorylate or dephosphorylate isocitrate dehydrogenase (IDH) on a specific serine residue. This is a regulatory mechanism which enables bacteria to bypass the Krebs cycle via the glyoxylate shunt in response to the source of carbon. When bacteria are grown on glucose, IDH is fully active and unphosphorylated, but when grown on acetate or ethanol, the activity of IDH declines drastically concomitant with its phosphorylation. This chain is Isocitrate dehydrogenase kinase/phosphatase, found in Pseudomonas fluorescens (strain ATCC BAA-477 / NRRL B-23932 / Pf-5).